The chain runs to 225 residues: UPF0700 transmembrane protein RA0705 (225 aa).

6 helical membrane passes run 17–37 (VGLA…AIGL), 66–86 (GLLL…GVMI), 95–115 (ALLF…QPEL), 117–137 (FVSL…IEGL), 168–188 (IIQI…AVLV), and 194–214 (LALW…FQIP).

The protein belongs to the UPF0700 family.

The protein localises to the cell membrane. This chain is UPF0700 transmembrane protein RA0705, found in Rhizobium meliloti (strain 1021) (Ensifer meliloti).